Consider the following 415-residue polypeptide: Putative F-box protein At5g40050 (415 aa).

In terms of domain architecture, F-box spans 13–59; it reads IDSISPLPDELLSHILSFLPTKRAASTSILSKRWRTLFPLMNHLCAS.

This chain is Putative F-box protein At5g40050, found in Arabidopsis thaliana (Mouse-ear cress).